The chain runs to 161 residues: Endoribonuclease YbeY (161 aa).

3 residues coordinate Zn(2+): His120, His124, and His130.

This sequence belongs to the endoribonuclease YbeY family. Zn(2+) is required as a cofactor.

The protein localises to the cytoplasm. Single strand-specific metallo-endoribonuclease involved in late-stage 70S ribosome quality control and in maturation of the 3' terminus of the 16S rRNA. The polypeptide is Endoribonuclease YbeY (Erythrobacter litoralis (strain HTCC2594)).